Consider the following 60-residue polypeptide: Large ribosomal subunit protein bL32 (60 aa).

Residues 1–28 (MAVQQNKKSRSKRDMRRSHDALTGPTLS) form a disordered region. Positions 7–16 (KKSRSKRDMR) are enriched in basic residues.

Belongs to the bacterial ribosomal protein bL32 family.

The polypeptide is Large ribosomal subunit protein bL32 (Cellvibrio japonicus (strain Ueda107) (Pseudomonas fluorescens subsp. cellulosa)).